The following is a 295-amino-acid chain: (R)-phenoxypropionate/alpha-ketoglutarate-dioxygenase (295 aa).

2 residues coordinate Fe cation: His-111 and Asp-113. 2-oxoglutarate is bound by residues Thr-138 and Trp-255. His-270 contributes to the Fe cation binding site. A 2-oxoglutarate-binding site is contributed by Arg-281.

The protein belongs to the TfdA dioxygenase family. Homotrimer. Requires Fe cation as cofactor. L-ascorbate is required as a cofactor.

It catalyses the reaction (R)-2-(4-chloro-2-methylphenoxy)propanoate + 2-oxoglutarate + O2 = 2-methyl-4-chlorophenol + pyruvate + succinate + CO2. The enzyme catalyses (R)-(2,4-dichlorophenoxy)propanoate + 2-oxoglutarate + O2 = 2,4-dichlorophenol + pyruvate + succinate + CO2. Its pathway is xenobiotic degradation; 2-(2,4-dichlorophenoxy)propanoate degradation. Its activity is regulated as follows. Inhibited by divalent cations, most significantly by copper and nickel, and by diethylpyrocarbonate (DEPC). In terms of biological role, involved in the degradation of the phenoxypropionate herbicides. Catalyzes the enantiospecific cleavage of the ether bond in the herbicid R-dichlorprop ((R)-2-(2,4-dichlorophenoxy)propionate)(R-2,4-DP) and R-mecoprop ((R)-2-(4-chloro-2-methylphenoxy)propionate)(R-2,4-MCPP). It can also accept (RS)-2-(2,4,5-trichlorophenoxy)propionate, (RS)-2-(4-chlorophenoxy)propionate, (RS)-2-(m-chlorophenoxy)propionate, however it can only accept 2-oxoglutarate as oxygen acceptor. The protein is (R)-phenoxypropionate/alpha-ketoglutarate-dioxygenase of Delftia acidovorans (Pseudomonas acidovorans).